The primary structure comprises 87 residues: Large ribosomal subunit protein bL31B (87 aa).

Belongs to the bacterial ribosomal protein bL31 family. Type B subfamily. As to quaternary structure, part of the 50S ribosomal subunit.

This Burkholderia thailandensis (strain ATCC 700388 / DSM 13276 / CCUG 48851 / CIP 106301 / E264) protein is Large ribosomal subunit protein bL31B.